A 623-amino-acid chain; its full sequence is Laccase-1 (623 aa).

Positions 1–22 are cleaved as a signal peptide; that stretch reads MKTFTSALALVVGMLAPGAVVA. A propeptide spanning residues 23–50 is cleaved from the precursor; sequence APPSTPAQRDLVELREARQEGGKDLRPR. A disulfide bond links cysteine 54 and cysteine 62. N-linked (GlcNAc...) asparagine glycosylation is found at asparagine 89 and asparagine 138. Cu cation is bound by residues histidine 143, histidine 145, histidine 188, and histidine 190. Cystine bridges form between cysteine 164/cysteine 590 and cysteine 348/cysteine 382. Residues asparagine 251, asparagine 266, asparagine 294, and asparagine 339 are each glycosylated (N-linked (GlcNAc...) asparagine). N-linked (GlcNAc...) asparagine glycans are attached at residues asparagine 426 and asparagine 446. Positions 481, 484, 486, 552, 553, 554, and 558 each coordinate Cu cation. A propeptide spanning residues 610–623 is cleaved from the precursor; sequence KRRRWVEESEWLVR.

The protein belongs to the multicopper oxidase family. As to quaternary structure, monomer. Cu cation serves as cofactor. Secreted protein; extracellular space.

The enzyme catalyses 4 hydroquinone + O2 = 4 benzosemiquinone + 2 H2O. In terms of biological role, lignin degradation and detoxification of lignin-derived products. This chain is Laccase-1 (LAC1), found in Melanocarpus albomyces.